The following is a 213-amino-acid chain: RNA pyrophosphohydrolase (213 aa).

The Nudix hydrolase domain maps to 6 to 149 (GFRPNVGIVL…KRGVYEIALT (144 aa)). The Nudix box motif lies at 38-59 (GGIDRGETPEQAMIRELHEEVG). A disordered region spans residues 185–213 (NFELPPGGSFEPNPQTSYGLDASGKPHET).

Belongs to the Nudix hydrolase family. RppH subfamily. The cofactor is a divalent metal cation.

In terms of biological role, accelerates the degradation of transcripts by removing pyrophosphate from the 5'-end of triphosphorylated RNA, leading to a more labile monophosphorylated state that can stimulate subsequent ribonuclease cleavage. The sequence is that of RNA pyrophosphohydrolase from Albidiferax ferrireducens (strain ATCC BAA-621 / DSM 15236 / T118) (Rhodoferax ferrireducens).